A 243-amino-acid chain; its full sequence is Uridylate kinase (243 aa).

12-15 is an ATP binding site; the sequence is KLSG. Positions 20–25 are involved in allosteric activation by GTP; sequence GAKGFG. 2 residues coordinate ATP: G55 and R59. UMP-binding positions include D74 and 135–142; that span reads TGNPYFTT. ATP is bound by residues Q163, Y169, and D172.

Belongs to the UMP kinase family. In terms of assembly, homohexamer.

It is found in the cytoplasm. It carries out the reaction UMP + ATP = UDP + ADP. The protein operates within pyrimidine metabolism; CTP biosynthesis via de novo pathway; UDP from UMP (UMPK route): step 1/1. Allosterically activated by GTP. Inhibited by UTP. Functionally, catalyzes the reversible phosphorylation of UMP to UDP. The chain is Uridylate kinase from Symbiobacterium thermophilum (strain DSM 24528 / JCM 14929 / IAM 14863 / T).